A 416-amino-acid polypeptide reads, in one-letter code: UDP-N-acetylglucosamine 1-carboxyvinyltransferase (416 aa).

22 to 23 (KN) contributes to the phosphoenolpyruvate binding site. Arg91 serves as a coordination point for UDP-N-acetyl-alpha-D-glucosamine. Cys115 acts as the Proton donor in catalysis. Cys115 carries the post-translational modification 2-(S-cysteinyl)pyruvic acid O-phosphothioketal. UDP-N-acetyl-alpha-D-glucosamine is bound by residues 120-124 (RPVDL), Asp303, and Ile325.

The protein belongs to the EPSP synthase family. MurA subfamily.

The protein localises to the cytoplasm. It carries out the reaction phosphoenolpyruvate + UDP-N-acetyl-alpha-D-glucosamine = UDP-N-acetyl-3-O-(1-carboxyvinyl)-alpha-D-glucosamine + phosphate. It functions in the pathway cell wall biogenesis; peptidoglycan biosynthesis. Cell wall formation. Adds enolpyruvyl to UDP-N-acetylglucosamine. This is UDP-N-acetylglucosamine 1-carboxyvinyltransferase from Oleidesulfovibrio alaskensis (strain ATCC BAA-1058 / DSM 17464 / G20) (Desulfovibrio alaskensis).